The primary structure comprises 746 residues: Actin filament-associated protein 1-like 1 (746 aa).

Residues 88-206 (EDQKKEPEAN…RLTHQWPSEE (119 aa)) are disordered. Over residues 98–107 (HTVTKPSKTD) the composition is skewed to polar residues. The span at 108-119 (SPPPLPNTPPPE) shows a compositional bias: pro residues. Over residues 139-148 (SRSSSSPPNS) the composition is skewed to low complexity. Residues 214 to 310 (DCHICAFLLR…WLHVVRDVTG (97 aa)) enclose the PH 1 domain. A disordered region spans residues 336 to 371 (EKQTSDSDSMPSGESARDIRENGKPKRGALSELTGT). The span at 350 to 359 (SARDIRENGK) shows a compositional bias: basic and acidic residues. In terms of domain architecture, PH 2 spans 406–497 (RCGYVGVLVN…WLGVLLAETG (92 aa)). 2 disordered regions span residues 539 to 596 (EVPF…TRAQ) and 723 to 746 (PSIYASTKGNVMQKAKEWESKKGT). Residues 562–575 (SFSSSDTGKPSPQI) show a composition bias toward polar residues. Residues 591–682 (GKTRAQEDAR…VKENLKKSLA (92 aa)) adopt a coiled-coil conformation. The segment covering 736–746 (KAKEWESKKGT) has biased composition (basic and acidic residues).

It is found in the cytoplasm. Its subcellular location is the cell projection. The protein resides in the podosome. The protein localises to the invadopodium. It localises to the cytoskeleton. It is found in the stress fiber. Functionally, may be involved in podosome and invadosome formation. This chain is Actin filament-associated protein 1-like 1 (afap1l1), found in Danio rerio (Zebrafish).